Consider the following 383-residue polypeptide: Acetylornithine deacetylase (383 aa).

Histidine 80 contacts Zn(2+). The active site involves aspartate 82. Residue aspartate 112 coordinates Zn(2+). Residue glutamate 144 is part of the active site. Zn(2+) contacts are provided by glutamate 145, glutamate 169, and histidine 355.

Belongs to the peptidase M20A family. ArgE subfamily. In terms of assembly, homodimer. It depends on Zn(2+) as a cofactor. The cofactor is Co(2+). Requires glutathione as cofactor.

Its subcellular location is the cytoplasm. It catalyses the reaction N(2)-acetyl-L-ornithine + H2O = L-ornithine + acetate. The protein operates within amino-acid biosynthesis; L-arginine biosynthesis; L-ornithine from N(2)-acetyl-L-ornithine (linear): step 1/1. Its function is as follows. Catalyzes the hydrolysis of the amide bond of N(2)-acetylated L-amino acids. Cleaves the acetyl group from N-acetyl-L-ornithine to form L-ornithine, an intermediate in L-arginine biosynthesis pathway, and a branchpoint in the synthesis of polyamines. The protein is Acetylornithine deacetylase of Escherichia coli O157:H7.